The following is a 328-amino-acid chain: MPGCPCPGCGMAGPRLLFLTALALELLGRAGGSQPALRSRGTATACRLDNKESESWGALLSGERLDTWICSLLGSLMVGLSGVFPLLVIPLEMGTMLRSEAGAWHLKQLLSFALGGLLGNVFLHLLPEAWAYTCSASPGGEGQSLQQQQQLGLWVIAGILTFLALEKMFLDSKEEGTSQVSGYLNLLANTIDNFTHGLAVAASFLVSKKIGLLTTMAILLHEIPHEVGDFAILLRAGFDRWSAAKLQLSTALGGLLGAGFAICTQSPKGVEETAAWVLPFTSGGFLYIALVNVLPDLLEEEDPWRSLQQLLLLCAGIVVMVLFSLFVD.

Residues 1-7 (MPGCPCP) are Lumenal-facing. A helical membrane pass occupies residues 8–28 (GCGMAGPRLLFLTALALELLG). Residues 29-68 (RAGGSQPALRSRGTATACRLDNKESESWGALLSGERLDTW) are Cytoplasmic-facing. The helical transmembrane segment at 69-89 (ICSLLGSLMVGLSGVFPLLVI) threads the bilayer. Residues 90-108 (PLEMGTMLRSEAGAWHLKQ) lie on the Lumenal side of the membrane. The helical transmembrane segment at 109–129 (LLSFALGGLLGNVFLHLLPEA) threads the bilayer. Topologically, residues 130-149 (WAYTCSASPGGEGQSLQQQQ) are cytoplasmic. A helical transmembrane segment spans residues 150 to 170 (QLGLWVIAGILTFLALEKMFL). Residues 171 to 199 (DSKEEGTSQVSGYLNLLANTIDNFTHGLA) are Lumenal-facing. Residues 200-220 (VAASFLVSKKIGLLTTMAILL) form a helical membrane-spanning segment. Positions 221 to 226 (HEIPHE) match the XEXPHE-motif motif. Residues 221–242 (HEIPHEVGDFAILLRAGFDRWS) lie on the Cytoplasmic side of the membrane. A helical transmembrane segment spans residues 243-263 (AAKLQLSTALGGLLGAGFAIC). Topologically, residues 264 to 273 (TQSPKGVEET) are lumenal. The chain crosses the membrane as a helical span at residues 274–294 (AAWVLPFTSGGFLYIALVNVL). The Cytoplasmic portion of the chain corresponds to 295–306 (PDLLEEEDPWRS). A helical transmembrane segment spans residues 307-327 (LQQLLLLCAGIVVMVLFSLFV). Position 328 (D328) is a topological domain, lumenal.

It belongs to the ZIP transporter (TC 2.A.5) family. As to quaternary structure, homodimer.

The protein resides in the golgi apparatus membrane. The protein localises to the cytoplasmic vesicle membrane. It localises to the endoplasmic reticulum membrane. It carries out the reaction Zn(2+)(in) = Zn(2+)(out). Functionally, functions as a zinc transporter transporting Zn(2+) from the Golgi apparatus to the cytosol and thus influences the zinc level at least in areas of the cytosol. May regulate beige adipocyte differentiation. In Pongo abelii (Sumatran orangutan), this protein is Zinc transporter ZIP13.